The sequence spans 427 residues: Trigger factor (427 aa).

A PPIase FKBP-type domain is found at 163–248 (GDIAVIDFKG…IKSIKVKELP (86 aa)).

Belongs to the FKBP-type PPIase family. Tig subfamily.

Its subcellular location is the cytoplasm. The enzyme catalyses [protein]-peptidylproline (omega=180) = [protein]-peptidylproline (omega=0). Functionally, involved in protein export. Acts as a chaperone by maintaining the newly synthesized protein in an open conformation. Functions as a peptidyl-prolyl cis-trans isomerase. The protein is Trigger factor of Clostridium beijerinckii (strain ATCC 51743 / NCIMB 8052) (Clostridium acetobutylicum).